Consider the following 549-residue polypeptide: Arginine-containing cyclodipeptide synthase amaA (549 aa).

The short motif at 445 to 449 (DDRAE) is the Conserved DDXXE motif element.

The protein belongs to the arginine-containing cyclodipeptide synthase family.

It catalyses the reaction L-prolyl-tRNA(Pro) + L-arginyl-tRNA(Arg) = cyclo(L-arginyl-L-prolyl) + tRNA(Pro) + tRNA(Arg) + 2 H(+). It participates in secondary metabolite biosynthesis. Its function is as follows. Arginine-containing cyclodipeptide synthase; part of the cluster that mediates the biosynthesis of a highly modified cyclo-arginine-proline dipeptide (cRP). Within the pathway, amaA acts as the scaffold-generating enzyme and is responsible for formation of the cyclo-Arg-Pro diketopiperazine (cRW) from L-arginyl-tRNA(Arg) + L-prolyl-tRNA(Pro). Additional enzymes from the cluster then further modify the cyclo-Arg-Pro diketopiperazine (cRW) scaffold. The chain is Arginine-containing cyclodipeptide synthase amaA from Apiospora montagnei (Sphaeria apiospora).